The chain runs to 82 residues: Putative antitoxin Saci_0468 (82 aa).

The protein belongs to the UPF0330 family.

Its function is as follows. Possibly the antitoxin component of a type II toxin-antitoxin (TA) system. The polypeptide is Putative antitoxin Saci_0468 (Sulfolobus acidocaldarius (strain ATCC 33909 / DSM 639 / JCM 8929 / NBRC 15157 / NCIMB 11770)).